The chain runs to 201 residues: Dephospho-CoA kinase (201 aa).

Positions 10–201 constitute a DPCK domain; it reads LIGLTGGIAT…PQIIKAWHHR (192 aa). 18-23 contributes to the ATP binding site; it reads ATGKST.

The protein belongs to the CoaE family.

It localises to the cytoplasm. The catalysed reaction is 3'-dephospho-CoA + ATP = ADP + CoA + H(+). It participates in cofactor biosynthesis; coenzyme A biosynthesis; CoA from (R)-pantothenate: step 5/5. Functionally, catalyzes the phosphorylation of the 3'-hydroxyl group of dephosphocoenzyme A to form coenzyme A. This Synechocystis sp. (strain ATCC 27184 / PCC 6803 / Kazusa) protein is Dephospho-CoA kinase.